A 218-amino-acid chain; its full sequence is Transcription initiation factor TFIID subunit 10 (218 aa).

2 stretches are compositionally biased toward low complexity: residues 1-21 (MSCSGSGADPEAAPASAASAP) and 29-39 (APAALPSSTAA). The tract at residues 1–85 (MSCSGSGADP…GAAPVSAGGA (85 aa)) is disordered. Position 2 is an N-acetylserine (Ser-2). Ser-44 carries the post-translational modification Phosphoserine. Thr-48 carries the phosphothreonine modification. Over residues 48–62 (TAGGPGAGAAAGGTG) the composition is skewed to gly residues. A [KR]-[STA]-K motif motif is present at residues 187–189 (KSK). Lys-189 carries the allysine; alternate modification. Residue Lys-189 is modified to N6,N6,N6-trimethyllysine; alternate.

Belongs to the TAF10 family. Component of the TFIID basal transcription factor complex, composed of TATA-box-binding protein TBP, and a number of TBP-associated factors (TAFs), including TAF1, TAF2, TAF3, TAF4, TAF5, TAF6, TAF7, TAF8, TAF9, TAF10, TAF11, TAF12 and TAF13. Component of the TATA-binding protein-free TAF complex (TFTC), the PCAF histone acetylase complex and the STAGA transcription coactivator-HAT complex. The PCAF complex consists at least of TADA2L/ADA2, TADA3L/ADA3, SUPT3H, TAF5L TAF6L, TAF9, TAF10, TAF12 and TRRAP. The TFTC-HAT complex consists at least of TAF5L, TAF6L, TADA3L, SUPT3H, TAF2, TAF4, TAF5, GCN5L2/GCN5, TAF10 and TRRAP. The STAGA transcription coactivator-HAT complex consists at least of SUPT3H, GCN5L2, TAF5L, TAF6L, SUPT7L, TADA3L, TAD1L, TAF10, TAF12, TRRAP and TAF9. The STAGA core complex is associated with a subcomplex required for histone deubiquitination composed of ATXN7L3, ENY2 and USP22. Interacts with TAF3. Interacts with LOXL2. Interacts with TAF12 isoform TAFII20; the interaction is direct. Post-translationally, monomethylated at Lys-189 by SETD7, leading to increased affinity for RNA polymerase II. Lysine deamination at Lys-189 to form allysine is mediated by LOXL2. Allysine formation by LOXL2 results in release of TAF10 from promoters, leading to inhibition of TFIID-dependent transcription.

Its subcellular location is the nucleus. The TFIID basal transcription factor complex plays a major role in the initiation of RNA polymerase II (Pol II)-dependent transcription. TFIID recognizes and binds promoters with or without a TATA box via its subunit TBP, a TATA-box-binding protein, and promotes assembly of the pre-initiation complex (PIC). The TFIID complex consists of TBP and TBP-associated factors (TAFs), including TAF1, TAF2, TAF3, TAF4, TAF5, TAF6, TAF7, TAF8, TAF9, TAF10, TAF11, TAF12 and TAF13. TAF10 is also component of the PCAF histone acetylase complex, the TATA-binding protein-free TAF complex (TFTC) and the STAGA transcription coactivator-HAT complex. May regulate cyclin E expression. This is Transcription initiation factor TFIID subunit 10 (TAF10) from Homo sapiens (Human).